The following is a 313-amino-acid chain: Aspartate carbamoyltransferase catalytic subunit (313 aa).

Carbamoyl phosphate contacts are provided by Arg58 and Thr59. L-aspartate is bound at residue Lys86. Residues Arg108, His136, and Gln139 each coordinate carbamoyl phosphate. Positions 169 and 224 each coordinate L-aspartate. 2 residues coordinate carbamoyl phosphate: Gly265 and Pro266.

Belongs to the aspartate/ornithine carbamoyltransferase superfamily. ATCase family. In terms of assembly, heterododecamer (2C3:3R2) of six catalytic PyrB chains organized as two trimers (C3), and six regulatory PyrI chains organized as three dimers (R2).

The catalysed reaction is carbamoyl phosphate + L-aspartate = N-carbamoyl-L-aspartate + phosphate + H(+). Its pathway is pyrimidine metabolism; UMP biosynthesis via de novo pathway; (S)-dihydroorotate from bicarbonate: step 2/3. Its function is as follows. Catalyzes the condensation of carbamoyl phosphate and aspartate to form carbamoyl aspartate and inorganic phosphate, the committed step in the de novo pyrimidine nucleotide biosynthesis pathway. This is Aspartate carbamoyltransferase catalytic subunit from Natranaerobius thermophilus (strain ATCC BAA-1301 / DSM 18059 / JW/NM-WN-LF).